We begin with the raw amino-acid sequence, 1185 residues long: Liprin-alpha-4 (1185 aa).

2 coiled-coil regions span residues 24–123 (ANFE…CLVS) and 165–499 (DEKV…GRGG). Disordered regions lie at residues 638 to 709 (SASP…RTLR) and 721 to 757 (EEGK…KSSI). Serine 640 bears the Phosphoserine mark. The span at 645-656 (GRSTPKLTSRSA) shows a compositional bias: polar residues. Serine 681 carries the post-translational modification Phosphoserine. Positions 684 to 695 (SREENREDKATI) are enriched in basic and acidic residues. The span at 729 to 742 (DQGSNPSSSNSSQD) shows a compositional bias: low complexity. SAM domains are found at residues 829–895 (WDGP…MVSL), 944–1008 (NHEW…LKRL), and 1032–1101 (WTND…LLAL).

It belongs to the liprin family. Liprin-alpha subfamily. Forms homodimers and heterodimers with liprins-alpha and liprins-beta. Interacts with the second PTPase domain of PTPRD, PTPRF and PTPRS. Interacts with RIMS1 and RIMS2. Interacts with GIT1 and GIT2. Interacts with GRIP1. Interacts with KIF1A. As to expression, expressed only in the heart, brain, and skeletal muscle.

It localises to the cytoplasm. The protein localises to the cell surface. May regulate the disassembly of focal adhesions. May localize receptor-like tyrosine phosphatases type 2A at specific sites on the plasma membrane, possibly regulating their interaction with the extracellular environment and their association with substrates. This Homo sapiens (Human) protein is Liprin-alpha-4 (PPFIA4).